The primary structure comprises 187 residues: Resolvase OPG149 (187 aa).

Belongs to the RuvC family. Poxviruses-type subfamily. Requires Mg(2+) as cofactor.

Functionally, plays a role in DNA replication by cleaving viral DNA concatamers to yield unit-length viral genomes. The concatamer junctions contain inverted repeat sequences that can be extruded as cruciforms, yielding Holliday junctions that A22 protein cleaves. The sequence is that of Resolvase OPG149 (OPG149) from Cynomys gunnisoni (Gunnison's prairie dog).